The sequence spans 75 residues: Dermaseptin-A3 (75 aa).

An N-terminal signal peptide occupies residues 1–22 (MAFLKKSLFLVLLLGLISLSIC). Residues 23 to 43 (EEEKRENEVEEEQEDDEQSEL) constitute a propeptide that is removed on maturation. The residue at position 72 (Q72) is a Glutamine amide. Positions 74 to 75 (EQ) are excised as a propeptide.

The protein belongs to the frog skin active peptide (FSAP) family. Dermaseptin subfamily. In terms of tissue distribution, expressed by the skin glands.

The protein resides in the secreted. Functionally, possesses a potent antimicrobial activity against Gram-positive and Gram-negative bacteria. Probably acts by disturbing membrane functions with its amphipathic structure. The sequence is that of Dermaseptin-A3 from Agalychnis annae (Blue-sided leaf frog).